The chain runs to 148 residues: Glyoxalase domain-containing protein 5 (148 aa).

Residues 25–145 enclose the VOC domain; it reads RLDHIVMTVK…DRNLLEVSSY (121 aa).

Belongs to the glyoxalase I family.

The protein is Glyoxalase domain-containing protein 5 (Glod5) of Mus musculus (Mouse).